We begin with the raw amino-acid sequence, 793 residues long: Coiled-coil domain-containing protein 175 (793 aa).

Coiled coils occupy residues 131–163 (EINT…NEAL), 205–377 (KRED…VLSE), 431–535 (KTVY…MLMK), 562–679 (LPQL…KYRE), and 716–745 (LVDN…QHVS).

The sequence is that of Coiled-coil domain-containing protein 175 (CCDC175) from Homo sapiens (Human).